Reading from the N-terminus, the 490-residue chain is Probable cytosol aminopeptidase (490 aa).

Mn(2+) is bound by residues Lys257 and Asp262. Residue Lys269 is part of the active site. Mn(2+)-binding residues include Asp281, Asp341, and Glu343. The active site involves Arg345.

The protein belongs to the peptidase M17 family. Mn(2+) serves as cofactor.

It is found in the cytoplasm. It carries out the reaction Release of an N-terminal amino acid, Xaa-|-Yaa-, in which Xaa is preferably Leu, but may be other amino acids including Pro although not Arg or Lys, and Yaa may be Pro. Amino acid amides and methyl esters are also readily hydrolyzed, but rates on arylamides are exceedingly low.. It catalyses the reaction Release of an N-terminal amino acid, preferentially leucine, but not glutamic or aspartic acids.. Functionally, presumably involved in the processing and regular turnover of intracellular proteins. Catalyzes the removal of unsubstituted N-terminal amino acids from various peptides. The protein is Probable cytosol aminopeptidase of Prochlorococcus marinus (strain MIT 9215).